The chain runs to 262 residues: Small ribosomal subunit protein eS4B (262 aa).

The S4 RNA-binding domain maps to 42-105; sequence LPLIVFLRNR…GEHFRLVYDI (64 aa). S223 is modified (phosphoserine).

This sequence belongs to the eukaryotic ribosomal protein eS4 family. In terms of assembly, component of the small ribosomal subunit (SSU). Mature yeast ribosomes consist of a small (40S) and a large (60S) subunit. The 40S small subunit contains 1 molecule of ribosomal RNA (18S rRNA) and at least 33 different proteins. The large 60S subunit contains 3 rRNA molecules (25S, 5.8S and 5S rRNA) and at least 46 different proteins.

Its subcellular location is the cytoplasm. It is found in the nucleus. The protein resides in the nucleolus. In terms of biological role, component of the ribosome, a large ribonucleoprotein complex responsible for the synthesis of proteins in the cell. The small ribosomal subunit (SSU) binds messenger RNAs (mRNAs) and translates the encoded message by selecting cognate aminoacyl-transfer RNA (tRNA) molecules. The large subunit (LSU) contains the ribosomal catalytic site termed the peptidyl transferase center (PTC), which catalyzes the formation of peptide bonds, thereby polymerizing the amino acids delivered by tRNAs into a polypeptide chain. The nascent polypeptides leave the ribosome through a tunnel in the LSU and interact with protein factors that function in enzymatic processing, targeting, and the membrane insertion of nascent chains at the exit of the ribosomal tunnel. This Schizosaccharomyces pombe (strain 972 / ATCC 24843) (Fission yeast) protein is Small ribosomal subunit protein eS4B (rps402).